The primary structure comprises 174 residues: RNA pyrophosphohydrolase (174 aa).

The Nudix hydrolase domain occupies 6–149; sequence GFRANVGIII…KRDVYRKVMK (144 aa). A Nudix box motif is present at residues 38-59; that stretch reads GGVDDGETAEEAMYRELYEEVG.

The protein belongs to the Nudix hydrolase family. RppH subfamily. Requires a divalent metal cation as cofactor.

Its function is as follows. Accelerates the degradation of transcripts by removing pyrophosphate from the 5'-end of triphosphorylated RNA, leading to a more labile monophosphorylated state that can stimulate subsequent ribonuclease cleavage. This Shewanella baltica (strain OS223) protein is RNA pyrophosphohydrolase.